Consider the following 372-residue polypeptide: Serine/threonine-protein kinase 17B (372 aa).

The 261-residue stretch at 33–293 (ILTSKELGRG…AEICLSHSWL (261 aa)) folds into the Protein kinase domain. Residues 39–47 (LGRGKFAVV) and Lys-62 each bind ATP. Asp-158 acts as the Proton acceptor in catalysis. The segment at 305–362 (EETSSSSQTQDHSVRSSEDKTSKSSCNGTCGDREDKENIPEDSSMVSKRFRFDDSLPN) is disordered. The segment covering 316-326 (HSVRSSEDKTS) has biased composition (basic and acidic residues).

It belongs to the protein kinase superfamily. CAMK Ser/Thr protein kinase family. DAP kinase subfamily. As to quaternary structure, interacts with CHP1; the interaction induces CHP1 to translocate from the Golgi to the nucleus. Autophosphorylated. As to expression, highly expressed in placenta, lung, pancreas. Lower levels in heart, brain, liver, skeletal muscle and kidney.

It is found in the nucleus. Its subcellular location is the cell membrane. The protein localises to the endoplasmic reticulum-Golgi intermediate compartment. It carries out the reaction L-seryl-[protein] + ATP = O-phospho-L-seryl-[protein] + ADP + H(+). The enzyme catalyses L-threonyl-[protein] + ATP = O-phospho-L-threonyl-[protein] + ADP + H(+). In terms of biological role, phosphorylates myosin light chains. Acts as a positive regulator of apoptosis. This is Serine/threonine-protein kinase 17B (STK17B) from Homo sapiens (Human).